The sequence spans 320 residues: ATP-dependent 6-phosphofructokinase (320 aa).

Gly12 contributes to the ATP binding site. Residues 22–26 and 55–60 each bind ADP; these read RGVVR and RYSVSD. ATP-binding positions include 73–74 and 103–106; these read RF and GDGS. Asp104 is a Mg(2+) binding site. 126–128 contacts substrate; that stretch reads TID. Residue Asp128 is the Proton acceptor of the active site. Residue Arg155 participates in ADP binding. Residues Arg163 and 170-172 contribute to the substrate site; that span reads MGR. ADP is bound by residues 186–188, Lys212, and 214–216; these read GCE and KKH. Residues Glu223, Arg244, and 250–253 each bind substrate; that span reads HIQR.

It belongs to the phosphofructokinase type A (PFKA) family. ATP-dependent PFK group I subfamily. Prokaryotic clade 'B1' sub-subfamily. Homotetramer. Requires Mg(2+) as cofactor.

It localises to the cytoplasm. It carries out the reaction beta-D-fructose 6-phosphate + ATP = beta-D-fructose 1,6-bisphosphate + ADP + H(+). It functions in the pathway carbohydrate degradation; glycolysis; D-glyceraldehyde 3-phosphate and glycerone phosphate from D-glucose: step 3/4. Allosterically activated by ADP and other diphosphonucleosides, and allosterically inhibited by phosphoenolpyruvate. Its function is as follows. Catalyzes the phosphorylation of D-fructose 6-phosphate to fructose 1,6-bisphosphate by ATP, the first committing step of glycolysis. This Erwinia tasmaniensis (strain DSM 17950 / CFBP 7177 / CIP 109463 / NCPPB 4357 / Et1/99) protein is ATP-dependent 6-phosphofructokinase.